A 901-amino-acid chain; its full sequence is HTH-type transcriptional regulator MalT (901 aa).

39-46 (SPAGYGKT) lines the ATP pocket. An HTH luxR-type domain is found at 829–894 (ELIRTSPLTQ…DAVQHAQQLL (66 aa)). The segment at residues 853–872 (NEQIAGELEVAATTIKTHIR) is a DNA-binding region (H-T-H motif).

It belongs to the MalT family. As to quaternary structure, monomer in solution. Oligomerizes to an active state in the presence of the positive effectors ATP and maltotriose.

With respect to regulation, activated by ATP and maltotriose, which are both required for DNA binding. Functionally, positively regulates the transcription of the maltose regulon whose gene products are responsible for uptake and catabolism of malto-oligosaccharides. Specifically binds to the promoter region of its target genes, recognizing a short DNA motif called the MalT box. The protein is HTH-type transcriptional regulator MalT of Escherichia fergusonii (strain ATCC 35469 / DSM 13698 / CCUG 18766 / IAM 14443 / JCM 21226 / LMG 7866 / NBRC 102419 / NCTC 12128 / CDC 0568-73).